Consider the following 475-residue polypeptide: Serralysin G (475 aa).

The propeptide occupies M1–S14. H186 contacts Zn(2+). E187 is a catalytic residue. Zn(2+) contacts are provided by H190 and Y226. Ca(2+)-binding residues include R261, G263, T265, D293, G295, G296, D298, E337, G342, G344, D346, N351, N355, G359, G360, A361, G362, D364, G368, G370, G371, D373, G377, G378, A379, G380, D382, D391, D398, and D408. Hemolysin-type calcium-binding repeat units lie at residues I340–I357 and D358–L375.

Belongs to the peptidase M10B family. The cofactor is Ca(2+). It depends on Zn(2+) as a cofactor.

The protein localises to the secreted. The catalysed reaction is Preferential cleavage of bonds with hydrophobic residues in P1'.. The sequence is that of Serralysin G (prtG) from Dickeya chrysanthemi (Pectobacterium chrysanthemi).